The chain runs to 110 residues: Parvalbumin alpha (110 aa).

S2 carries the N-acetylserine modification. 3 positions are modified to phosphoserine: S2, S8, and S24. 2 consecutive EF-hand domains span residues 39–74 and 78–110; these read KSAD…FSSD and LSAK…VAES. Residues D52, D54, S56, F58, E60, and E63 each contribute to the Ca(2+) site. Phosphoserine is present on S66. Ca(2+)-binding residues include D91, D93, D95, K97, and E102.

Its function is as follows. In muscle, parvalbumin is thought to be involved in relaxation after contraction. It binds two calcium ions. The polypeptide is Parvalbumin alpha (Pvalb) (Rattus norvegicus (Rat)).